Reading from the N-terminus, the 1493-residue chain is DNA excision repair protein ERCC-6 (1493 aa).

A disordered region spans residues Met1–Gly39. Positions Met1–Tyr510 are N-terminal domain; essential for its chromatin remodeling activity. Over residues His8–Glu27 the composition is skewed to polar residues. Ser10 carries the phosphoserine; by ATM modification. The residue at position 158 (Ser158) is a Phosphoserine; by CDK2. N6-methylated lysine; by EHMT2 is present on Lys170. Residue Lys205 forms a Glycyl lysine isopeptide (Lys-Gly) (interchain with G-Cter in SUMO3) linkage. Lys255 participates in a covalent cross-link: Glycyl lysine isopeptide (Lys-Gly) (interchain with G-Cter in SUMO2). 2 disordered regions span residues Lys287–Lys323 and Gly344–Arg453. Lys297 is subject to N6-methylated lysine; by EHMT2. A compositionally biased stretch (basic and acidic residues) spans Arg353–Ala363. Acidic residues predominate over residues Glu364–Glu392. Phosphoserine occurs at positions 429 and 430. Lys448 carries the post-translational modification N6-methylated lysine; by EHMT2. Phosphoserine occurs at positions 486 and 489. One can recognise a Helicase ATP-binding domain in the interval Trp519–Gly695. An ATP-binding site is contributed by Asp532–Thr539. The short motif at Asp646 to His649 is the DEAH box element. The Helicase C-terminal domain occupies Val843–Tyr1002. Disordered stretches follow at residues Pro1042–Ile1147, His1181–Asn1247, and Arg1318–Leu1384. Lys1054 bears the N6-methylated lysine; by EHMT2 mark. Residues Ile1123–Pro1141 show a composition bias toward polar residues. Ser1142 bears the Phosphoserine mark. Basic residues predominate over residues Leu1200–Lys1210. 2 stretches are compositionally biased toward basic and acidic residues: residues His1211–Arg1221 and Gln1232–Asn1247. A compositionally biased stretch (basic residues) spans Lys1327–Asn1336. The span at Ser1337–Glu1351 shows a compositional bias: polar residues. Ser1348 carries the phosphoserine modification. A compositionally biased stretch (basic and acidic residues) spans Lys1352–Asp1376. The short motif at Ser1386–His1398 is the CSA-interacting motif (CIM) element. A ubiquitin-binding domain (UBD) region spans residues Ile1400–Leu1428. Residues Val1429 to Cys1493 are winged-helix domain (WHD). Positions Ser1446–Cys1493 are essential for its interaction with RNA polymerase II, transcription-coupled nucleotide excision repair activity, association with chromatin after UV irradiation and for mediating the UV-induced translocation of ERRC8 to the nuclear matrix.

This sequence belongs to the SNF2/RAD54 helicase family. In terms of assembly, homodimer. Binds DNA. Interacts with ERCC8. Interacts with RNA polymerase II; interaction is enhanced by UV irradiation. Component of the B-WICH complex, at least composed of SMARCA5/SNF2H, BAZ1B/WSTF, SF3B1, DEK, MYO1C, ERCC6, MYBBP1A and DDX21. Interacts with KIAA1530/UVSSA. Interacts with ELOA and CUL5; the interaction is induced by DNA damaging agents or by inhibitors of RNA polymerase II elongation. Interacts (via WHD region) with RIF1. Interacts with SMARCC2/BAF170, SMARCB1/BAF47 and the neuron-specific chromatin remodeling complex (nBAF complex). Interacts with ERCC5/XPG (via C-terminus); the interaction stimulates ERCC6/CSB binding to the DNA repair bubble and ERCC6/CSB ATPase activity. May form a complex composed of RNA polymerase II, ERCC6/CSB and ERCC5/XPG which associates with the DNA repair bubble during transcription-coupled nucleotide excision repair. Interacts with CAND1, CSTF1, DDX3X, DDX5, DDX17, DDX23, DHX36, HDAC1, HNRNPU, MTA2, PRPF3, PSMD3, RBBP4, SFPQ, SMARCA1, SMARCA2, TOP1, USP7, XRCC5, COPS3, COPS4, COPS6, DDX1, DDX41, GATAD2A, GATAD2B, PRPF4, PSMC5, SF3B2, CTR9, NONO, PSMD12 and TOP2A. Post-translationally, phosphorylated in a cell cycle-dependent manner at Ser-158 by cyclin A-CDK2 and at Ser-10 by ATM in response to DNA damage. Phosphorylation at these two sites promotes the intramolecular interaction of the N-terminal domain with the helicase ATP-binding domain, thereby probably releasing the inhibitory effect of the N-terminal domain on its ATPase activity. Phosphorylation is essential for its chromatin remodeling activity. Ubiquitinated at the C-terminus. Ubiquitination by the CSA complex leads to ERCC6 proteasomal degradation in a UV-dependent manner. Stabilized following interaction with KIAA1530/UVSSA, which promotes recruitment of deubiquitinating enzyme USP7, leading to deubiquitination of ERCC6 thereby preventing UV-induced degradation of ERCC6 by the proteasome. In terms of processing, sumoylation at Lys-205 in an UV-radiation-dependent manner is essential for its transcription-coupled nucleotide excision repair activity.

The protein localises to the nucleus. It is found in the chromosome. The enzyme catalyses ATP + H2O = ADP + phosphate + H(+). Its function is as follows. Essential factor involved in transcription-coupled nucleotide excision repair (TC-NER), a process during which RNA polymerase II-blocking lesions are rapidly removed from the transcribed strand of active genes. Plays a central role in the initiation of the TC-NER process: specifically recognizes and binds RNA polymerase II stalled at a lesion, and mediates recruitment of ERCC8/CSA, initiating DNA damage excision by TFIIH recruitment. Upon DNA-binding, it locally modifies DNA conformation by wrapping the DNA around itself, thereby modifying the interface between stalled RNA polymerase II and DNA. Acts as a chromatin remodeler at DSBs; DNA-dependent ATPase-dependent activity is essential for this function. Plays an important role in regulating the choice of the DNA double-strand breaks (DSBs) repair pathway and G2/M checkpoint activation; DNA-dependent ATPase activity is essential for this function. Regulates the DNA repair pathway choice by inhibiting non-homologous end joining (NHEJ), thereby promoting the homologous recombination (HR)-mediated repair of DSBs during the S/G2 phases of the cell cycle. Mediates the activation of the ATM- and CHEK2-dependent DNA damage responses thus preventing premature entry of cells into mitosis following the induction of DNA DSBs. Remodels chromatin by evicting histones from chromatin flanking DSBs, limiting RIF1 accumulation at DSBs thereby promoting BRCA1-mediated HR. Required for stable recruitment of ELOA and CUL5 to DNA damage sites. Also involved in UV-induced translocation of ERCC8 to the nuclear matrix. Essential for neuronal differentiation and neuritogenesis; regulates transcription and chromatin remodeling activities required during neurogenesis. The sequence is that of DNA excision repair protein ERCC-6 from Homo sapiens (Human).